The sequence spans 675 residues: UvrABC system protein B (675 aa).

In terms of domain architecture, Helicase ATP-binding spans 35-422 (EGVSDGLMFQ…ADNVVEQVVR (388 aa)). 48-55 (GVTGSGKT) is a binding site for ATP. The Beta-hairpin motif lies at 101–124 (YYDYYQPEAYVPTRDLFIEKDSSI). The Helicase C-terminal domain occupies 439 to 605 (QVDDLLGEIH…GVSKAVRELI (167 aa)). The UVR domain occupies 633 to 668 (AREIRRLEKLMMDHARNLEFEQAAAARDALNALKSR).

The protein belongs to the UvrB family. Forms a heterotetramer with UvrA during the search for lesions. Interacts with UvrC in an incision complex.

It is found in the cytoplasm. Functionally, the UvrABC repair system catalyzes the recognition and processing of DNA lesions. A damage recognition complex composed of 2 UvrA and 2 UvrB subunits scans DNA for abnormalities. Upon binding of the UvrA(2)B(2) complex to a putative damaged site, the DNA wraps around one UvrB monomer. DNA wrap is dependent on ATP binding by UvrB and probably causes local melting of the DNA helix, facilitating insertion of UvrB beta-hairpin between the DNA strands. Then UvrB probes one DNA strand for the presence of a lesion. If a lesion is found the UvrA subunits dissociate and the UvrB-DNA preincision complex is formed. This complex is subsequently bound by UvrC and the second UvrB is released. If no lesion is found, the DNA wraps around the other UvrB subunit that will check the other stand for damage. The protein is UvrABC system protein B of Bordetella bronchiseptica (strain ATCC BAA-588 / NCTC 13252 / RB50) (Alcaligenes bronchisepticus).